Consider the following 115-residue polypeptide: Phosphoribosyl-AMP cyclohydrolase (115 aa).

D80 contacts Mg(2+). C81 provides a ligand contact to Zn(2+). D82 and D84 together coordinate Mg(2+). The Zn(2+) site is built by C97 and C104.

Belongs to the PRA-CH family. In terms of assembly, homodimer. Mg(2+) serves as cofactor. It depends on Zn(2+) as a cofactor.

It localises to the cytoplasm. The catalysed reaction is 1-(5-phospho-beta-D-ribosyl)-5'-AMP + H2O = 1-(5-phospho-beta-D-ribosyl)-5-[(5-phospho-beta-D-ribosylamino)methylideneamino]imidazole-4-carboxamide. The protein operates within amino-acid biosynthesis; L-histidine biosynthesis; L-histidine from 5-phospho-alpha-D-ribose 1-diphosphate: step 3/9. Functionally, catalyzes the hydrolysis of the adenine ring of phosphoribosyl-AMP. The polypeptide is Phosphoribosyl-AMP cyclohydrolase (Rhodococcus erythropolis (strain PR4 / NBRC 100887)).